Consider the following 638-residue polypeptide: Phenylethylamine oxidase (638 aa).

The propeptide occupies 1–2; it reads MT. 296-307 serves as a coordination point for substrate; that stretch reads YFDTGEYLVGQY. The Proton acceptor role is filled by aspartate 298. A disulfide bond links cysteine 317 and cysteine 343. 379-384 provides a ligand contact to substrate; the sequence is IGNYDY. Tyrosine 382 acts as the Schiff-base intermediate with substrate; via topaquinone in catalysis. The residue at position 382 (tyrosine 382) is a 2',4',5'-topaquinone. The Cu cation site is built by histidine 431, histidine 433, and histidine 592.

The protein belongs to the copper/topaquinone oxidase family. As to quaternary structure, homodimer. Cu cation serves as cofactor. L-topaquinone is required as a cofactor. In terms of processing, topaquinone (TPQ) is generated by copper-dependent autoxidation of a specific tyrosyl residue.

It catalyses the reaction a primary methyl amine + O2 + H2O = an aldehyde + H2O2 + NH4(+). The catalysed reaction is 2-phenylethylamine + O2 + H2O = 2-phenylacetaldehyde + H2O2 + NH4(+). Its function is as follows. Catalyzes the oxidative deamination of phenylethylamine to phenylacetaldehyde with the concomitant production of hydrogen peroxide and ammonia. This chain is Phenylethylamine oxidase, found in Arthrobacter globiformis.